The primary structure comprises 303 residues: E3 ubiquitin-protein ligase CCNB1IP1 homolog (303 aa).

The RING-type; degenerate zinc finger occupies 3-42; that stretch reads CNACWRELEGQAVSTTCGHLLCTEDAKKILSNDAACPICD. Residues 119–184 adopt a coiled-coil conformation; it reads LEEVHTAYQK…YESAKRSAIQ (66 aa). The segment at 201-268 is disordered; that stretch reads VPNIMDSSDP…DIRPRQPARP (68 aa).

As to quaternary structure, interacts with ZIP4 and PTD. Expressed in young panicles.

The protein localises to the nucleus. It localises to the chromosome. The catalysed reaction is S-ubiquitinyl-[E2 ubiquitin-conjugating enzyme]-L-cysteine + [acceptor protein]-L-lysine = [E2 ubiquitin-conjugating enzyme]-L-cysteine + N(6)-ubiquitinyl-[acceptor protein]-L-lysine.. The protein operates within protein modification; protein ubiquitination. Functionally, ubiquitin E3 ligase required for class I crossover (CO) formation during meiosis. The chain is E3 ubiquitin-protein ligase CCNB1IP1 homolog from Oryza sativa subsp. japonica (Rice).